A 577-amino-acid chain; its full sequence is DNA primase (577 aa).

The CHC2-type zinc-finger motif lies at 40–64; that stretch reads CPFHHDKTPSFTVSNEKQFYYCFGC. Residues 255–337 enclose the Toprim domain; it reads VYLLVVEGYI…KKTLKFILLP (83 aa). Mg(2+) contacts are provided by glutamate 261, aspartate 305, and aspartate 307.

This sequence belongs to the DnaG primase family. In terms of assembly, monomer. Interacts with DnaB. Zn(2+) is required as a cofactor. It depends on Mg(2+) as a cofactor.

It carries out the reaction ssDNA + n NTP = ssDNA/pppN(pN)n-1 hybrid + (n-1) diphosphate.. Its function is as follows. RNA polymerase that catalyzes the synthesis of short RNA molecules used as primers for DNA polymerase during DNA replication. The sequence is that of DNA primase from Buchnera aphidicola subsp. Acyrthosiphon pisum (strain APS) (Acyrthosiphon pisum symbiotic bacterium).